The chain runs to 475 residues: 3-isopropylmalate dehydratase large subunit (475 aa).

Cys352, Cys412, and Cys415 together coordinate [4Fe-4S] cluster.

Belongs to the aconitase/IPM isomerase family. LeuC type 1 subfamily. As to quaternary structure, heterodimer of LeuC and LeuD. Requires [4Fe-4S] cluster as cofactor.

It catalyses the reaction (2R,3S)-3-isopropylmalate = (2S)-2-isopropylmalate. It participates in amino-acid biosynthesis; L-leucine biosynthesis; L-leucine from 3-methyl-2-oxobutanoate: step 2/4. Catalyzes the isomerization between 2-isopropylmalate and 3-isopropylmalate, via the formation of 2-isopropylmaleate. In Gluconobacter oxydans (strain 621H) (Gluconobacter suboxydans), this protein is 3-isopropylmalate dehydratase large subunit.